The sequence spans 303 residues: Methionyl-tRNA formyltransferase (303 aa).

108–111 (SDLP) is a binding site for (6S)-5,6,7,8-tetrahydrofolate.

The protein belongs to the Fmt family.

It carries out the reaction L-methionyl-tRNA(fMet) + (6R)-10-formyltetrahydrofolate = N-formyl-L-methionyl-tRNA(fMet) + (6S)-5,6,7,8-tetrahydrofolate + H(+). Attaches a formyl group to the free amino group of methionyl-tRNA(fMet). The formyl group appears to play a dual role in the initiator identity of N-formylmethionyl-tRNA by promoting its recognition by IF2 and preventing the misappropriation of this tRNA by the elongation apparatus. The sequence is that of Methionyl-tRNA formyltransferase from Rickettsia africae (strain ESF-5).